A 439-amino-acid polypeptide reads, in one-letter code: GTPase Obg (439 aa).

In terms of domain architecture, Obg spans 1–159 (MAFVDQAEIE…RKLKLELKVL (159 aa)). The region spanning 160 to 336 (ADVGLVGFPS…LMRLTADLLA (177 aa)) is the OBG-type G domain. GTP is bound by residues 166-173 (GFPSAGKS), 191-195 (FTTLS), 213-216 (DLPG), 283-286 (TKMD), and 317-319 (SAL). Mg(2+) is bound by residues S173 and T193. In terms of domain architecture, OCT spans 358-439 (DFKPEQHNFT…NSDFVFEFSD (82 aa)).

This sequence belongs to the TRAFAC class OBG-HflX-like GTPase superfamily. OBG GTPase family. As to quaternary structure, monomer. Mg(2+) serves as cofactor.

It is found in the cytoplasm. Its function is as follows. An essential GTPase which binds GTP, GDP and possibly (p)ppGpp with moderate affinity, with high nucleotide exchange rates and a fairly low GTP hydrolysis rate. Plays a role in control of the cell cycle, stress response, ribosome biogenesis and in those bacteria that undergo differentiation, in morphogenesis control. The protein is GTPase Obg of Leuconostoc citreum (strain KM20).